Here is a 516-residue protein sequence, read N- to C-terminus: Endoglucanase 20 (516 aa).

The first 23 residues, 1–23, serve as a signal peptide directing secretion; the sequence is MAAGMVATMVLLTCLAAGGLVVG. Asn83 is a glycosylation site (N-linked (GlcNAc...) asparagine). Asp93 (nucleophile) is an active-site residue. Catalysis depends on residues His416, Asp468, and Glu477.

This sequence belongs to the glycosyl hydrolase 9 (cellulase E) family.

The protein resides in the secreted. The enzyme catalyses Endohydrolysis of (1-&gt;4)-beta-D-glucosidic linkages in cellulose, lichenin and cereal beta-D-glucans.. This is Endoglucanase 20 (GLU15) from Oryza sativa subsp. japonica (Rice).